A 651-amino-acid chain; its full sequence is A-type voltage-gated potassium channel KCND1 (651 aa).

Over 1 to 183 (MAAGVATWLP…RAFENPHTST (183 aa)) the chain is Cytoplasmic. An interaction with KCNIP1, KCNIP2, and other family members region spans residues 2-20 (AAGVATWLPFARAAAVGWL). Positions 104, 131, and 132 each coordinate Zn(2+). Positions 144 to 164 (AERLAEDEEAEQAGEGPALPA) are disordered. A helical membrane pass occupies residues 184-205 (AALVFYYVTGFFIAVSVIANVV). The Extracellular portion of the chain corresponds to 206–230 (ETIPCRGTPRWPSKEQSCGDRFPTA). A helical membrane pass occupies residues 231–252 (FFCMDTACVLIFTGEYLLRLFA). At 253–263 (APSRCRFLRSV) the chain is on the cytoplasmic side. A helical membrane pass occupies residues 264–284 (MSLIDVVAILPYYIGLFVPKN). The Extracellular portion of the chain corresponds to 285–287 (DDV). A helical; Voltage-sensor transmembrane segment spans residues 288-308 (SGAFVTLRVFRVFRIFKFSRH). Topologically, residues 309-323 (SQGLRILGYTLKSCA) are cytoplasmic. The segment at 310 to 323 (QGLRILGYTLKSCA) is S4-S5 linker. A helical membrane pass occupies residues 324-345 (SELGFLLFSLTMAIIIFATVMF). The Extracellular portion of the chain corresponds to 346–359 (YAEKGTSKTNFTSI). An N-linked (GlcNAc...) asparagine glycan is attached at N355. Positions 360-371 (PAAFWYTIVTMT) form an intramembrane region, helical. Positions 372 to 377 (TLGYGD) match the Selectivity filter motif. An intramembrane segment occupies 372-379 (TLGYGDMV). Topologically, residues 380-386 (PSTIAGK) are extracellular. Residues 387–415 (IFGSICSLSGVLVIALPVPVIVSNFSRIY) traverse the membrane as a helical segment. At 416 to 651 (HQNQRADKRR…LPETVKISSL (236 aa)) the chain is on the cytoplasmic side. S458 bears the Phosphoserine mark. The interval 474-489 (FEQQHHHLLHCLEKTT) is required for dendritic targeting. S555 is subject to Phosphoserine. 2 disordered regions span residues 566–585 (RRSPAPQTRSSLNAKPHDSL) and 601–651 (IPTP…ISSL). The span at 626–637 (TPNTTLRNSSLG) shows a compositional bias: polar residues.

Belongs to the potassium channel family. D (Shal) (TC 1.A.1.2) subfamily. Kv4.1/KCND1 sub-subfamily. As to quaternary structure, component of heteromultimeric potassium channels. Identified in potassium channel complexes containing KCND1, KCND2, KCND3, KCNIP1, KCNIP2, KCNIP3, KCNIP4, DPP6 and DPP10.

The protein resides in the cell membrane. The catalysed reaction is K(+)(in) = K(+)(out). In terms of biological role, A-type voltage-gated potassium channel that mediates transmembrane potassium transport in excitable membranes in the brain. Mediates A-type current I(SA) in suprachiasmatic nucleus (SCN) neurons. Exhibits a low-threshold A-type current with a hyperpolarized steady-state inactivation midpoint and the recovery process was steeply voltage-dependent, with recovery being markedly faster at more negative potentials. May regulates repetitive firing rates in the suprachiasmatic nucleus (SCN) neurons and circadian rhythms in neuronal excitability and behavior. Contributes to the regulation of the circadian rhythm of action potential firing in suprachiasmatic nucleus neurons, which regulates the circadian rhythm of locomotor activity. The regulatory subunit KCNIP1 modulates the kinetics of channel inactivation, increases the current amplitudes and accelerates recovery from inactivation, shifts activation in a depolarizing direction. The regulatory subunit DPP10 decreases the voltage sensitivity of the inactivation channel gating. This chain is A-type voltage-gated potassium channel KCND1, found in Mus musculus (Mouse).